A 332-amino-acid chain; its full sequence is Glyceraldehyde-3-phosphate dehydrogenase 2 (332 aa).

Arg11, Ile12, and Asp33 together coordinate NAD(+). Residues Lys46 and Lys63 each participate in a glycyl lysine isopeptide (Lys-Gly) (interchain with G-Cter in ubiquitin) cross-link. Residue Thr120 coordinates NAD(+). Residues 149–151 (SCT), Thr180, 209–210 (TG), and Arg232 contribute to the D-glyceraldehyde 3-phosphate site. Cys150 functions as the Nucleophile in the catalytic mechanism. Ser302 carries the post-translational modification Phosphoserine. The NAD(+) site is built by Asn314 and Tyr318.

Belongs to the glyceraldehyde-3-phosphate dehydrogenase family. As to quaternary structure, homotetramer.

The protein resides in the cytoplasm. The catalysed reaction is D-glyceraldehyde 3-phosphate + phosphate + NAD(+) = (2R)-3-phospho-glyceroyl phosphate + NADH + H(+). It catalyses the reaction NADH + H2O = (6R)-NADHX. It carries out the reaction NADH + H2O = (6S)-NADHX. The enzyme catalyses NADPH + H2O = (6R)-NADPHX. The catalysed reaction is NADPH + H2O = (6S)-NADPHX. It functions in the pathway carbohydrate degradation; glycolysis; pyruvate from D-glyceraldehyde 3-phosphate: step 1/5. In terms of biological role, glyceraldehyde-3-phosphate dehydrogenase (GAPDH) involved in glycolysis and gluconeogenesis. Catalyzes the reaction of glyceraldehyde-3-phosphate to 1,3 bis-phosphoglycerate. The contribution of the TDH1, TDH2, and TDH3 to the total glyceraldehyde-3-phosphate dehydrogenase activity is 10-15, 25-30, and 50-60%, respectively. Functionally, as a side activity, catalyzes the hydration of the nicotinamide ring of NADH or NADPH at the C6 position to give the corresponding hydrates, NADHX and NADPHX, which exist as R and S epimers, that cannot act as electron donors or acceptors and inhibit several dehydrogenases, making them toxic. This chain is Glyceraldehyde-3-phosphate dehydrogenase 2, found in Saccharomyces cerevisiae (strain ATCC 204508 / S288c) (Baker's yeast).